We begin with the raw amino-acid sequence, 328 residues long: GTPase Obg 2 (328 aa).

An Obg domain is found at 1–139 (MSFRREKFIE…HCVLLKLKIV (139 aa)). In terms of domain architecture, OBG-type G spans 140 to 309 (SDVGIIGMPN…LHAQVKKAVV (170 aa)). GTP-binding positions include 146 to 153 (GMPNAGKS), 171 to 175 (FTTLE), 192 to 195 (DIPG), 259 to 262 (NKCD), and 290 to 292 (GDE). 2 residues coordinate Mg(2+): S153 and T173.

It belongs to the TRAFAC class OBG-HflX-like GTPase superfamily. OBG GTPase family. In terms of assembly, monomer. Mg(2+) serves as cofactor.

It localises to the cytoplasm. In terms of biological role, an essential GTPase which binds GTP, GDP and possibly (p)ppGpp with moderate affinity, with high nucleotide exchange rates and a fairly low GTP hydrolysis rate. Plays a role in control of the cell cycle, stress response, ribosome biogenesis and in those bacteria that undergo differentiation, in morphogenesis control. The protein is GTPase Obg 2 of Anaplasma marginale (strain Florida).